A 199-amino-acid polypeptide reads, in one-letter code: Probable GTP-binding protein EngB (199 aa).

An EngB-type G domain is found at 28 to 199 (DLPEVALAGR…EAWDTILAEL (172 aa)). GTP-binding positions include 36 to 43 (GRSNVGKS), 63 to 67 (GKTQL), 81 to 84 (DVPG), 148 to 151 (TKAD), and 180 to 182 (FSS). Serine 43 and threonine 65 together coordinate Mg(2+).

This sequence belongs to the TRAFAC class TrmE-Era-EngA-EngB-Septin-like GTPase superfamily. EngB GTPase family. The cofactor is Mg(2+).

Its function is as follows. Necessary for normal cell division and for the maintenance of normal septation. In Streptococcus thermophilus (strain CNRZ 1066), this protein is Probable GTP-binding protein EngB.